A 463-amino-acid chain; its full sequence is MKVLDRSAFKKTINVYSIEIKPNQINNLNKCLKNYYFKNRRCKITEEKISDNVKLFLNPALIKNFDDFSENTKIELKNLGITKDMFSNEIITLDYDYWKLNEVLKAILPKDEPPLTSYSIIGHIVHLNLKDHLIDYKYIIAEVLKDKVSVAKTVVNKTNKIDNVYRNFEMEVLCGEPDFIASVIEYDTKFEFDFSKVYWNPRLSTEHNRIVNLVNHGDVLFDVFAGVGPFSIRAAKKNCLVHANDLNPDSFKWLNHNINLNKKAKGWITTYNKDGSDFILNDFKSNMLKIWSDSNFLGQIHVVMNLPAKALSFLKYFKGLFDEQDLKEIKKDHLEKHLPIIYCYFFAKKDESLDEIFKTHLEYKFDENEYEFNFVRNVSNGKNMHRVTFQMPLSILMIDNSDISEPLPKRISKSLKAKTKAKEYTGNLKKIKETLNKNISKIDSDFLKLQNDISKKKEKPDDK.

Residues His-207, 245–246, 274–275, and Asn-305 contribute to the S-adenosyl-L-methionine site; these read DL and DG.

The protein belongs to the class I-like SAM-binding methyltransferase superfamily. TRM5/TYW2 family. As to quaternary structure, monomer.

It is found in the mitochondrion matrix. Its subcellular location is the nucleus. It localises to the cytoplasm. The enzyme catalyses guanosine(37) in tRNA + S-adenosyl-L-methionine = N(1)-methylguanosine(37) in tRNA + S-adenosyl-L-homocysteine + H(+). Functionally, specifically methylates the N1 position of guanosine-37 in various cytoplasmic and mitochondrial tRNAs. Methylation is not dependent on the nature of the nucleoside 5' of the target nucleoside. This is the first step in the biosynthesis of wybutosine (yW), a modified base adjacent to the anticodon of tRNAs and required for accurate decoding. The chain is tRNA (guanine(37)-N(1))-methyltransferase from Pediculus humanus subsp. corporis (Body louse).